Here is a 353-residue protein sequence, read N- to C-terminus: Cyanuric acid amidohydrolase (353 aa).

Residues 1–90 (MSSTALYTVP…NIFVRDERQY (90 aa)) form an RU A region. Substrate-binding positions include arginine 49 and 69-70 (SG). Residues 96–231 (GLVTAVGRTR…CHILVVAESD (136 aa)) are RU B. Lysine 145 is a catalytic residue. Substrate-binding positions include arginine 177 and 214–215 (SS). Catalysis depends on serine 214, which acts as the Nucleophile. Residues 237–353 (LRAAHTAMRD…TANATGEASR (117 aa)) form an RU C region. Glutamate 275 is a binding site for Mg(2+). Substrate-binding positions include arginine 302 and 321–322 (SG). Mg(2+)-binding residues include alanine 324, glutamine 327, glycine 328, proline 329, and glycine 332.

The protein belongs to the cyclic amide hydrolase (CyAH) family. Homotetramer.

It carries out the reaction cyanurate + H2O = 1-carboxybiuret + H(+). It functions in the pathway xenobiotic degradation; atrazine degradation; biuret from cyanurate: step 1/1. Inhibited by barbituric acid. Responsible for the hydrolysis of cyanuric acid, an intermediate formed during catabolism of s-triazine based compounds in herbicides such as atrazine and polymers such as melamine. Catalyzes the hydrolytic opening of the s-triazine ring of cyanuric acid (2,4,6-trihydroxy-s-triazine) to yield carbon dioxide and carboxybiuret, which spontaneously decarboxylates to biuret. Required for growth on melamine or cyanuric acid as sole nitrogen source. This is Cyanuric acid amidohydrolase from Rhodococcus sp.